A 175-amino-acid polypeptide reads, in one-letter code: Tumor necrosis factor receptor superfamily member 13C (175 aa).

The Extracellular portion of the chain corresponds to 1–71 (MGARRLRVRS…EGSALRPDVA (71 aa)). One copy of the TNFR-Cys; truncated repeat lies at 21–38 (QCNQTECFDPLVRNCVSC). Disulfide bonds link Cys22-Cys35 and Cys27-Cys38. Asn23 carries N-linked (GlcNAc...) asparagine glycosylation. Residues 29 to 34 (DPLVRN) form an essential for TNFSF13B/TALL1/BAFF/BLyS binding region. The chain crosses the membrane as a helical; Signal-anchor for type III membrane protein span at residues 72–92 (LLVGAPALLGLILALTLVGLV). The Cytoplasmic segment spans residues 93 to 175 (SLVSWRWRQQ…VTTKTAGPEQ (83 aa)). Residues 124-175 (VPSSETPHASAPTWPPLKEDADSALPRHSVPVPATELGSTELVTTKTAGPEQ) are disordered. Residues 160 to 175 (LGSTELVTTKTAGPEQ) are compositionally biased toward polar residues.

Highly expressed in spleen and testis; detected at lower levels in lung and thymus.

The protein localises to the membrane. Functionally, B-cell receptor specific for TNFSF13B/TALL1/BAFF/BLyS. Promotes the survival of mature B-cells and the B-cell response. This chain is Tumor necrosis factor receptor superfamily member 13C (Tnfrsf13c), found in Mus musculus (Mouse).